Here is a 193-residue protein sequence, read N- to C-terminus: Holliday junction branch migration complex subunit RuvA (193 aa).

The interval 1–64 (MIGRIAGTLL…EDAHLLYGFL (64 aa)) is domain I. The interval 65–139 (TPPERSTFRE…GKLGADLGPL (75 aa)) is domain II. The tract at residues 139–143 (LAGAA) is flexible linker. The interval 144 to 193 (SPSDHATDILNALVALGYSEKEALAAIKNVPAGTGVSEGIKLSLKALSKA) is domain III.

This sequence belongs to the RuvA family. As to quaternary structure, homotetramer. Forms an RuvA(8)-RuvB(12)-Holliday junction (HJ) complex. HJ DNA is sandwiched between 2 RuvA tetramers; dsDNA enters through RuvA and exits via RuvB. An RuvB hexamer assembles on each DNA strand where it exits the tetramer. Each RuvB hexamer is contacted by two RuvA subunits (via domain III) on 2 adjacent RuvB subunits; this complex drives branch migration. In the full resolvosome a probable DNA-RuvA(4)-RuvB(12)-RuvC(2) complex forms which resolves the HJ.

Its subcellular location is the cytoplasm. Functionally, the RuvA-RuvB-RuvC complex processes Holliday junction (HJ) DNA during genetic recombination and DNA repair, while the RuvA-RuvB complex plays an important role in the rescue of blocked DNA replication forks via replication fork reversal (RFR). RuvA specifically binds to HJ cruciform DNA, conferring on it an open structure. The RuvB hexamer acts as an ATP-dependent pump, pulling dsDNA into and through the RuvAB complex. HJ branch migration allows RuvC to scan DNA until it finds its consensus sequence, where it cleaves and resolves the cruciform DNA. The polypeptide is Holliday junction branch migration complex subunit RuvA (Burkholderia mallei (strain NCTC 10229)).